The sequence spans 373 residues: UDP-N-acetylglucosamine--N-acetylmuramyl-(pentapeptide) pyrophosphoryl-undecaprenol N-acetylglucosamine transferase (373 aa).

UDP-N-acetyl-alpha-D-glucosamine-binding positions include 14–16, Asn128, Arg165, Ser199, and Gln295; that span reads TAG.

It belongs to the glycosyltransferase 28 family. MurG subfamily.

Its subcellular location is the cell membrane. It catalyses the reaction di-trans,octa-cis-undecaprenyl diphospho-N-acetyl-alpha-D-muramoyl-L-alanyl-D-glutamyl-meso-2,6-diaminopimeloyl-D-alanyl-D-alanine + UDP-N-acetyl-alpha-D-glucosamine = di-trans,octa-cis-undecaprenyl diphospho-[N-acetyl-alpha-D-glucosaminyl-(1-&gt;4)]-N-acetyl-alpha-D-muramoyl-L-alanyl-D-glutamyl-meso-2,6-diaminopimeloyl-D-alanyl-D-alanine + UDP + H(+). Its pathway is cell wall biogenesis; peptidoglycan biosynthesis. Cell wall formation. Catalyzes the transfer of a GlcNAc subunit on undecaprenyl-pyrophosphoryl-MurNAc-pentapeptide (lipid intermediate I) to form undecaprenyl-pyrophosphoryl-MurNAc-(pentapeptide)GlcNAc (lipid intermediate II). This is UDP-N-acetylglucosamine--N-acetylmuramyl-(pentapeptide) pyrophosphoryl-undecaprenol N-acetylglucosamine transferase from Mycobacterium sp. (strain JLS).